Consider the following 395-residue polypeptide: Putative 8-amino-7-oxononanoate synthase (395 aa).

Position 23 (R23) interacts with substrate. 110-111 (GF) is a pyridoxal 5'-phosphate binding site. H135 is a binding site for substrate. Pyridoxal 5'-phosphate-binding positions include S182, 207 to 210 (DEAH), and 239 to 242 (TFSK). At K242 the chain carries N6-(pyridoxal phosphate)lysine. Residue T356 participates in substrate binding.

Belongs to the class-II pyridoxal-phosphate-dependent aminotransferase family. BioF subfamily. In terms of assembly, homodimer. It depends on pyridoxal 5'-phosphate as a cofactor.

The enzyme catalyses 6-carboxyhexanoyl-[ACP] + L-alanine + H(+) = (8S)-8-amino-7-oxononanoate + holo-[ACP] + CO2. The protein operates within cofactor biosynthesis; biotin biosynthesis. Catalyzes the decarboxylative condensation of pimeloyl-[acyl-carrier protein] and L-alanine to produce 8-amino-7-oxononanoate (AON), [acyl-carrier protein], and carbon dioxide. The chain is Putative 8-amino-7-oxononanoate synthase (bioF) from Bacillus thuringiensis subsp. konkukian (strain 97-27).